Here is a 348-residue protein sequence, read N- to C-terminus: Probable purine nucleoside permease C285.05 (348 aa).

Residues 1–21 form the signal peptide; it reads MLFLKLVASVLALMTIVPAQA.

It belongs to the NUP family.

Its subcellular location is the endoplasmic reticulum. In terms of biological role, probable nucleoside permease that transports adenosine and guanosine. The sequence is that of Probable purine nucleoside permease C285.05 from Schizosaccharomyces pombe (strain 972 / ATCC 24843) (Fission yeast).